Reading from the N-terminus, the 93-residue chain is Integration host factor subunit beta (93 aa).

Belongs to the bacterial histone-like protein family. As to quaternary structure, heterodimer of an alpha and a beta chain.

Functionally, this protein is one of the two subunits of integration host factor, a specific DNA-binding protein that functions in genetic recombination as well as in transcriptional and translational control. The protein is Integration host factor subunit beta of Glaesserella parasuis serovar 5 (strain SH0165) (Haemophilus parasuis).